Consider the following 553-residue polypeptide: Thermosome subunit beta (553 aa).

Residues 534–553 (KKSEGKTGEKKESEKGKEED) form a disordered region.

This sequence belongs to the TCP-1 chaperonin family. In terms of assembly, forms a Heterooligomeric complex of two stacked eight-membered rings.

In terms of biological role, molecular chaperone; binds unfolded polypeptides in vitro, and has a weak ATPase activity. This is Thermosome subunit beta (thsB) from Sulfolobus acidocaldarius (strain ATCC 33909 / DSM 639 / JCM 8929 / NBRC 15157 / NCIMB 11770).